Here is a 70-residue protein sequence, read N- to C-terminus: MEANTYLNAIILVLVVTIIAVISTSLVRTEPCVIKITGESITVLACKLDAETIRAIADLKPLSVERLSFH.

Residues 1-6 (MEANTY) lie on the Lumenal side of the membrane. The helical transmembrane segment at 7–27 (LNAIILVLVVTIIAVISTSLV) threads the bilayer. Topologically, residues 28–70 (RTEPCVIKITGESITVLACKLDAETIRAIADLKPLSVERLSFH) are cytoplasmic.

Belongs to the Tymovirales TGBp3 protein family.

It localises to the host endoplasmic reticulum membrane. In terms of biological role, plays a role in viral cell-to-cell propagation, by facilitating genome transport to neighboring plant cells through plasmosdesmata. May induce the formation of granular vesicles derived from the Endoplasmic reticulum, which align on actin filaments. The chain is Movement protein TGBp3 from Potato virus X (PVX).